A 354-amino-acid polypeptide reads, in one-letter code: Carbonic anhydrase 12 (354 aa).

A signal peptide spans 1–24 (MPRRSLHAAAVLLLVILKEQPSSP). Residues 25–301 (APVNGSKWTY…VQVCTAAGLS (277 aa)) lie on the Extracellular side of the membrane. 2 N-linked (GlcNAc...) asparagine glycosylation sites follow: asparagine 28 and asparagine 80. Positions 30 to 289 (SKWTYFGPDG…FDERLVYTSF (260 aa)) constitute an Alpha-carbonic anhydrase domain. A disulfide bond links cysteine 50 and cysteine 230. The active-site Proton donor/acceptor is the histidine 94. Residues histidine 119, histidine 121, and histidine 145 each coordinate Zn(2+). A glycan (N-linked (GlcNAc...) asparagine) is linked at asparagine 162. 226 to 227 (TT) is a substrate binding site. A helical membrane pass occupies residues 302 to 322 (LGIILSLALAGILGICIVVVV). At 323–354 (SIWLFRRKSIKKGDNKGVIYKPATKMETEAHA) the chain is on the cytoplasmic side.

It belongs to the alpha-carbonic anhydrase family. In terms of assembly, homodimer. Zn(2+) serves as cofactor. As to expression, highly expressed in colon, kidney, prostate, intestine and activated lymphocytes. Expressed at much higher levels in the renal cell cancers than in surrounding normal kidney tissue. Moderately expressed in pancreas, ovary and testis. Expressed in sweat glands and bronchiolar epithelium.

The protein localises to the membrane. Its subcellular location is the cell membrane. It catalyses the reaction hydrogencarbonate + H(+) = CO2 + H2O. With respect to regulation, inhibited by coumarins, saccharin, sulfonamide derivatives such as acetazolamide (AZA), benzenesulfonamide and derivatives (4-carboxyethylbenzene-sulfonamide, 4-carboxyethylbenzene-sulfonamide ethyl ester, 4-(acetyl-2-aminoethyl)benzene-sulfonamide, 4-aminoethylbenzene-sulfonamide) and Foscarnet (phosphonoformate trisodium salt). Reversible hydration of carbon dioxide. This is Carbonic anhydrase 12 from Homo sapiens (Human).